We begin with the raw amino-acid sequence, 282 residues long: Cell division protein FtsQ (282 aa).

Over 1-30 (MINIGPPKKRRLRRKGNRFKKTRRVIPWRR) the chain is Cytoplasmic. The chain crosses the membrane as a helical span at residues 31 to 51 (LMIGALWGTMALASLGMVVAV). Topologically, residues 52 to 282 (ACFAGQMLFA…LDAGELRGKG (231 aa)) are periplasmic. One can recognise a POTRA domain in the interval 65 to 133 (FKVERIQVEN…DQLVIRVDER (69 aa)).

Belongs to the FtsQ/DivIB family. FtsQ subfamily.

The protein resides in the cell inner membrane. Functionally, essential cell division protein. In Syntrophotalea carbinolica (strain DSM 2380 / NBRC 103641 / GraBd1) (Pelobacter carbinolicus), this protein is Cell division protein FtsQ.